Consider the following 171-residue polypeptide: CDP-archaeol synthase (171 aa).

5 helical membrane passes run 7 to 27 (MFWA…PVLL), 55 to 75 (FLGG…LTPA), 84 to 104 (VLLA…GSFI), 115 to 135 (PAVG…AYPV), and 141 to 161 (GQML…NYFA).

Belongs to the CDP-archaeol synthase family. Requires Mg(2+) as cofactor.

It localises to the cell membrane. The enzyme catalyses 2,3-bis-O-(geranylgeranyl)-sn-glycerol 1-phosphate + CTP + H(+) = CDP-2,3-bis-O-(geranylgeranyl)-sn-glycerol + diphosphate. It functions in the pathway membrane lipid metabolism; glycerophospholipid metabolism. In terms of biological role, catalyzes the formation of CDP-2,3-bis-(O-geranylgeranyl)-sn-glycerol (CDP-archaeol) from 2,3-bis-(O-geranylgeranyl)-sn-glycerol 1-phosphate (DGGGP) and CTP. This reaction is the third ether-bond-formation step in the biosynthesis of archaeal membrane lipids. The sequence is that of CDP-archaeol synthase from Thermococcus gammatolerans (strain DSM 15229 / JCM 11827 / EJ3).